Consider the following 296-residue polypeptide: Phosphatidylcholine:diacylglycerol cholinephosphotransferase 2 (296 aa).

5 helical membrane-spanning segments follow: residues H83–F103, V136–W156, T165–T182, P198–A218, and G250–A270. Active-site residues include H211, H251, and D255.

It belongs to the phosphatidylcholine:diacylglycerol cholinephosphotransferase family.

Its subcellular location is the membrane. Its function is as follows. Functions as a phosphatidylcholine:diacylglycerol cholinephosphotransferase that catalyzes the transfer of the phosphocholine headgroup from phosphatidylcholine (PC) to diacylglycerol, a major reaction for the transfer of 18:1 into phosphatidylcholine for desaturation and also for the reverse transfer of 18:2 and 18:3 into the triacylglycerols synthesis pathway. The sequence is that of Phosphatidylcholine:diacylglycerol cholinephosphotransferase 2 from Arabidopsis thaliana (Mouse-ear cress).